The chain runs to 26 residues: Morintide mO4 (26 aa).

In terms of domain architecture, Chitin-binding type-1 spans 1 to 26; sequence NRLCCSQYGFCGTTSEYCSRVSGCQS. C4 and C18 are joined by a disulfide.

In terms of tissue distribution, seeds (at protein level).

Its function is as follows. Chitin-binding protein which functions in defense against chitin-containing fungal pathogens. The sequence is that of Morintide mO4 from Moringa oleifera (Horseradish tree).